The primary structure comprises 88 residues: Acylphosphatase (88 aa).

Residues 3 to 88 (AARFIFTGVV…IPTTEAFVTG (86 aa)) form the Acylphosphatase-like domain. Residues Arg18 and Asn36 contribute to the active site.

It belongs to the acylphosphatase family.

It carries out the reaction an acyl phosphate + H2O = a carboxylate + phosphate + H(+). This Xanthomonas campestris pv. campestris (strain 8004) protein is Acylphosphatase (acyP).